A 497-amino-acid polypeptide reads, in one-letter code: Serine hydroxymethyltransferase, mitochondrial (497 aa).

The N-terminal 27 residues, M1–A27, are a transit peptide targeting the mitochondrion. The residue at position 272 (K272) is an N6-(pyridoxal phosphate)lysine.

This sequence belongs to the SHMT family. Homotetramer. Requires pyridoxal 5'-phosphate as cofactor.

The protein localises to the mitochondrion. The enzyme catalyses (6R)-5,10-methylene-5,6,7,8-tetrahydrofolate + glycine + H2O = (6S)-5,6,7,8-tetrahydrofolate + L-serine. It functions in the pathway one-carbon metabolism; tetrahydrofolate interconversion. In terms of biological role, interconversion of serine and glycine. This is Serine hydroxymethyltransferase, mitochondrial (SHM1) from Eremothecium gossypii (strain ATCC 10895 / CBS 109.51 / FGSC 9923 / NRRL Y-1056) (Yeast).